The following is a 411-amino-acid chain: 3-phosphoshikimate 1-carboxyvinyltransferase (411 aa).

Residues Lys20, Ser21, and Arg25 each contribute to the 3-phosphoshikimate site. A phosphoenolpyruvate-binding site is contributed by Lys20. 2 residues coordinate phosphoenolpyruvate: Gly86 and Arg114. Residues Ser156, Ser157, Gln158, Ser181, Asp295, and Lys322 each coordinate 3-phosphoshikimate. Position 158 (Gln158) interacts with phosphoenolpyruvate. The active-site Proton acceptor is Asp295. Positions 326, 367, and 393 each coordinate phosphoenolpyruvate.

This sequence belongs to the EPSP synthase family. In terms of assembly, monomer.

It localises to the cytoplasm. It carries out the reaction 3-phosphoshikimate + phosphoenolpyruvate = 5-O-(1-carboxyvinyl)-3-phosphoshikimate + phosphate. Its pathway is metabolic intermediate biosynthesis; chorismate biosynthesis. Catalyzes the transfer of the enolpyruvyl moiety of phosphoenolpyruvate (PEP) to the 5-hydroxyl of shikimate-3-phosphate (S3P) to produce enolpyruvyl shikimate-3-phosphate and inorganic phosphate. The protein is 3-phosphoshikimate 1-carboxyvinyltransferase of Picrophilus torridus (strain ATCC 700027 / DSM 9790 / JCM 10055 / NBRC 100828 / KAW 2/3).